The primary structure comprises 218 residues: Oxaloacetate decarboxylase, mitochondrial (218 aa).

A mitochondrion-targeting transit peptide spans 1 to 18; the sequence is MNKFWETGRKIVAVGRNY. Residues Glu63, Glu65, and Asp94 each coordinate Mg(2+).

Belongs to the FAH family. As to quaternary structure, homodimer. It depends on Mg(2+) as a cofactor. The cofactor is Mn(2+).

It is found in the mitochondrion. The protein resides in the cytoplasm. Its subcellular location is the cytosol. It carries out the reaction a 3-acylpyruvate + H2O = a carboxylate + pyruvate + H(+). It catalyses the reaction acetylpyruvate + H2O = acetate + pyruvate + H(+). The catalysed reaction is 3-fumarylpyruvate + H2O = fumarate + pyruvate + H(+). The enzyme catalyses oxaloacetate + H(+) = pyruvate + CO2. In terms of biological role, mitochondrial protein that acts as an oxaloacetate decarboxylase (ODx), catalyzing the decarboxylation of oxaloacetate (OAA) to pyruvate and CO(2), and as such is likely a regulatory enzyme in the TCA cycle. Also displays acylpyruvase activity, being able to hydrolyze acetylpyruvate and fumarylpyruvate in vitro. In Dictyostelium discoideum (Social amoeba), this protein is Oxaloacetate decarboxylase, mitochondrial (fahd1).